Consider the following 1088-residue polypeptide: Pathogenesis-related homeodomain protein (1088 aa).

Repeat copies occupy residues 140–152 (INMG…PEEV), 173–199 (NSYQ…RSDD), 205–239 (GLVE…KVQT), 240–274 (GLEQ…KVQN), 283–295 (INME…PEQV), 316–342 (NSDQ…QSDD), 348–382 (GFKE…KVQT), and 383–417 (GLEQ…KVQD). A 2 X 13 AA repeats region spans residues 140–295 (INMGQKETMP…EQKETIPEQV (156 aa)). The tract at residues 173–342 (NSYQSGLPPE…HAQFGHQSDD (170 aa)) is 2 X 27 AA approximate repeats. The 2 X 35 AA approximate tandem repeats (type C) stretch occupies residues 205 to 274 (GLVELVIGQK…SRGRPRKVQN (70 aa)). The segment at 220 to 282 (PSQLVETGKR…QNSPTSFLEN (63 aa)) is disordered. DNA-binding regions (a.T hook) lie at residues 226 to 236 (TGKRGRGRPRK) and 261 to 271 (TGKRSRGRPRK). A compositionally biased stretch (polar residues) spans 272–282 (VQNSPTSFLEN). The span at 303-320 (SLTIPTDNQSRTYNSDQS) shows a compositional bias: polar residues. Disordered stretches follow at residues 303–343 (SLTI…SDDT) and 363–484 (PSQL…RMEE). The 2 X 35 AA approximate tandem repeats (type C) stretch occupies residues 348-417 (GFKELVIGQE…SRGRPRKVQD (70 aa)). 2 consecutive DNA-binding regions (a.T hook) follow at residues 369–379 (AGKRGRGRPRK) and 404–414 (TGKRSRGRPRK). The PHD-type zinc-finger motif lies at 578–635 (DIFCAKCGSKDVTLSNDIILCDGACDRGFHQFCLDPPLLKEYIPPDDEGWLCPGCECK). Disordered regions lie at residues 667-810 (AASG…PLYP) and 851-901 (EEYG…ARES). A 4-1 repeat occupies 678 to 693 (GLPSDDSEDDDYDPGG). The segment at 678 to 744 (GLPSDDSEDD…SEDDEYDPSG (67 aa)) is 2 X 16 AA Asp/Glu-rich (acidic) repeats. Residues 705–718 (SSTDESDYQSESDD) are compositionally biased toward acidic residues. One copy of the 4-2 repeat lies at 729–744 (GLPSDDSEDDEYDPSG). 2 stretches are compositionally biased toward basic and acidic residues: residues 788-802 (DHVR…HPEQ) and 874-901 (NNSD…ARES). Residues 935-994 (KSTSKTLHGEHATQRLLQSFKENQYPQRAVKESLAAELALSVRQVSNWFNNRRWSFRHSS) constitute a DNA-binding region (homeobox).

It belongs to the PHD-associated homeobox family.

It is found in the nucleus. Functionally, specifically binds to the fungal elicitor-responsive DNA element, 5'-CTAATTGTTTA-3', of the gene PR2 promoter. The protein is Pathogenesis-related homeodomain protein (PRH) of Petroselinum crispum (Parsley).